We begin with the raw amino-acid sequence, 206 residues long: Small ribosomal subunit protein uS4 (206 aa).

Residues 98–155 form the S4 RNA-binding domain; that stretch reads TRLDNVVYRLGWALSRAQARQIVSHGKIAVNGKRVNIPSYNLKPGDVVELLDKDLIPV.

This sequence belongs to the universal ribosomal protein uS4 family. Part of the 30S ribosomal subunit. Contacts protein S5. The interaction surface between S4 and S5 is involved in control of translational fidelity.

One of the primary rRNA binding proteins, it binds directly to 16S rRNA where it nucleates assembly of the body of the 30S subunit. Functionally, with S5 and S12 plays an important role in translational accuracy. In Dictyoglomus turgidum (strain DSM 6724 / Z-1310), this protein is Small ribosomal subunit protein uS4.